A 147-amino-acid chain; its full sequence is Protein phosphatase 1 regulatory subunit 14B (147 aa).

The interval 1–55 is disordered; that stretch reads MADSGTAGGAALAAPAPGPGSGGPGPRVYFQSPPGAAGEGPGGADDEGPVRRQGK. An N-acetylalanine modification is found at A2. S21 bears the Phosphoserine mark. At Y29 the chain carries Phosphotyrosine. The residue at position 32 (S32) is a Phosphoserine. A Phosphothreonine modification is found at T57. Positions 61 to 103 form a coiled coil; that stretch reads DRKELRKRLNLEEWILEQLTRLYDCQEEEIPELEIDVDELLDM.

It belongs to the PP1 inhibitor family. Post-translationally, phosphorylated primarily on Thr-57 by PKC (in vitro). An unknown Ser is also phosphorylated by PKC (in vitro). As to expression, ubiquitous. Expressed at low levels.

The protein localises to the cytoplasm. Inhibitor of PPP1CA. Has over 50-fold higher inhibitory activity when phosphorylated. This is Protein phosphatase 1 regulatory subunit 14B (PPP1R14B) from Homo sapiens (Human).